Reading from the N-terminus, the 109-residue chain is Translation initiation factor IF-1, chloroplastic (109 aa).

The S1-like domain occupies 18-93; the sequence is KSLNQEKENL…TRGRIIYRLK (76 aa).

This sequence belongs to the IF-1 family. Component of the 30S ribosomal translation pre-initiation complex which assembles on the 30S ribosome in the order IF-2 and IF-3, IF-1 and N-formylmethionyl-tRNA(fMet); mRNA recruitment can occur at any time during PIC assembly.

The protein resides in the plastid. It localises to the chloroplast. Functionally, one of the essential components for the initiation of protein synthesis. Stabilizes the binding of IF-2 and IF-3 on the 30S subunit to which N-formylmethionyl-tRNA(fMet) subsequently binds. Helps modulate mRNA selection, yielding the 30S pre-initiation complex (PIC). Upon addition of the 50S ribosomal subunit IF-1, IF-2 and IF-3 are released leaving the mature 70S translation initiation complex. The chain is Translation initiation factor IF-1, chloroplastic from Tupiella akineta (Green alga).